Consider the following 320-residue polypeptide: Fructose-1,6-bisphosphatase class 1 (320 aa).

Residues Glu-105, Asp-124, Leu-126, and Asp-127 each contribute to the Mg(2+) site. Residues 127 to 130, Tyr-233, and Lys-263 contribute to the substrate site; that span reads DGSS. A Mg(2+)-binding site is contributed by Glu-269.

This sequence belongs to the FBPase class 1 family. Homotetramer. It depends on Mg(2+) as a cofactor.

The protein resides in the cytoplasm. The enzyme catalyses beta-D-fructose 1,6-bisphosphate + H2O = beta-D-fructose 6-phosphate + phosphate. It functions in the pathway carbohydrate biosynthesis; gluconeogenesis. The sequence is that of Fructose-1,6-bisphosphatase class 1 from Methanocorpusculum labreanum (strain ATCC 43576 / DSM 4855 / Z).